A 572-amino-acid polypeptide reads, in one-letter code: Probable inactive glycosyltransferase 25 family member 3 (572 aa).

4 N-linked (GlcNAc...) asparagine glycosylation sites follow: Asn52, Asn130, Asn214, and Asn337. The Prevents secretion from ER signature appears at 569–572 (RDEL).

Belongs to the glycosyltransferase 25 family.

Its subcellular location is the endoplasmic reticulum lumen. In terms of biological role, probable cell adhesion protein involved in leukocyte transmigration across the blood-brain barrier. Does not express any beta-galactosyltransferase activity in vitro. The protein is Probable inactive glycosyltransferase 25 family member 3 (Cercam) of Rattus norvegicus (Rat).